Reading from the N-terminus, the 139-residue chain is Nucleoside diphosphate kinase (139 aa).

6 residues coordinate ATP: Lys-9, Phe-57, Arg-85, Thr-91, Arg-102, and Asn-112. The active-site Pros-phosphohistidine intermediate is the His-115.

This sequence belongs to the NDK family. As to quaternary structure, homotetramer. Mg(2+) serves as cofactor.

The protein localises to the cytoplasm. The catalysed reaction is a 2'-deoxyribonucleoside 5'-diphosphate + ATP = a 2'-deoxyribonucleoside 5'-triphosphate + ADP. It catalyses the reaction a ribonucleoside 5'-diphosphate + ATP = a ribonucleoside 5'-triphosphate + ADP. Its function is as follows. Major role in the synthesis of nucleoside triphosphates other than ATP. The ATP gamma phosphate is transferred to the NDP beta phosphate via a ping-pong mechanism, using a phosphorylated active-site intermediate. The sequence is that of Nucleoside diphosphate kinase from Exiguobacterium sp. (strain ATCC BAA-1283 / AT1b).